A 94-amino-acid chain; its full sequence is Dynein light chain, cytoplasmic (94 aa).

This sequence belongs to the dynein light chain family. As to quaternary structure, homodimer. Cytoplasmic dynein consists of two catalytic heavy chains (HCs) and a number of non-catalytic subunits which present intermediate chains (ICs), light intermediate chains (LICs) and light chains (LCs). Component of the nuclear pore complex (NPC). The nuclear pore complex constitutes the exclusive means of nucleocytoplasmic transport. NPCs allow the passive diffusion of ions and small molecules and the active, nuclear transport receptor-mediated bidirectional transport of macromolecules such as proteins, RNAs, ribonucleoparticles (RNPs), and ribosomal subunits across the nuclear envelope. Due to its 8-fold rotational symmetry, all subunits are present with 8 copies or multiples thereof.

The protein resides in the cytoplasm. It is found in the cytoskeleton. The protein localises to the nucleus. It localises to the nuclear pore complex. Acts as one of several non-catalytic accessory components of the cytoplasmic dynein complex that are thought to be involved in linking dynein to cargos and to adapter proteins that regulate dynein function. Cytoplasmic dynein 1 acts as a motor for the intracellular retrograde motility of vesicles and organelles along microtubules. May play a role in changing or maintaining the spatial distribution of cytoskeletal structures. Also a component of the nuclear pore complex. The chain is Dynein light chain, cytoplasmic (nudG) from Emericella nidulans (strain FGSC A4 / ATCC 38163 / CBS 112.46 / NRRL 194 / M139) (Aspergillus nidulans).